Reading from the N-terminus, the 440-residue chain is MSAAPTSGPLTCRRAGPLRGAIEVPGDKSISHRSLLFGALSTGETRVTGLLDAEDVHSTRKAVEALGAIVREEGGEVVVTPPATLREPGDVIDCGNSGTSLRLLTGVLSGVPGLSVLTGDASLRRRPVRRVIDPLRAMGANLSARDGDRLPPVVVRGGPLRGARQVLPVASAQVKSAILLAGLFAEGETTVVEPEKSRDHTERMLRGMGVPVKVSGLEVSVSAARPAGGRVDVPGDISSAAFFLCGAAALPGSEVTVRNLGVNETRTGLLDVLRAMGADVWLANLREVAGEPRADVTVRADRLEATEIRGATIPRLIDELPVVMVMATQARGRTVIRDAKELRVKESDRLAAMGETLARAGARIELYEDGCAIEGPTPLRGVEVRTRLDHRIAMSMAVAQLFCGGEPVVLDDVACVATSFPSFFRLLDQVAARVSVGGAP.

Residues lysine 28, serine 29, and arginine 33 each coordinate 3-phosphoshikimate. Residue lysine 28 coordinates phosphoenolpyruvate. Residues glycine 98 and arginine 126 each coordinate phosphoenolpyruvate. 4 residues coordinate 3-phosphoshikimate: serine 171, glutamine 173, aspartate 318, and lysine 345. Phosphoenolpyruvate is bound at residue glutamine 173. Aspartate 318 serves as the catalytic Proton acceptor. 2 residues coordinate phosphoenolpyruvate: arginine 349 and arginine 391.

Belongs to the EPSP synthase family. Monomer.

It is found in the cytoplasm. The enzyme catalyses 3-phosphoshikimate + phosphoenolpyruvate = 5-O-(1-carboxyvinyl)-3-phosphoshikimate + phosphate. Its pathway is metabolic intermediate biosynthesis; chorismate biosynthesis; chorismate from D-erythrose 4-phosphate and phosphoenolpyruvate: step 6/7. Functionally, catalyzes the transfer of the enolpyruvyl moiety of phosphoenolpyruvate (PEP) to the 5-hydroxyl of shikimate-3-phosphate (S3P) to produce enolpyruvyl shikimate-3-phosphate and inorganic phosphate. The protein is 3-phosphoshikimate 1-carboxyvinyltransferase of Anaeromyxobacter dehalogenans (strain 2CP-C).